Reading from the N-terminus, the 599-residue chain is Elongation factor 4 (599 aa).

One can recognise a tr-type G domain in the interval 5 to 187 (KNIRNFSIIA…QLVERIPAPE (183 aa)). GTP-binding positions include 17-22 (DHGKST) and 134-137 (NKID).

It belongs to the TRAFAC class translation factor GTPase superfamily. Classic translation factor GTPase family. LepA subfamily.

It localises to the cell inner membrane. The enzyme catalyses GTP + H2O = GDP + phosphate + H(+). Functionally, required for accurate and efficient protein synthesis under certain stress conditions. May act as a fidelity factor of the translation reaction, by catalyzing a one-codon backward translocation of tRNAs on improperly translocated ribosomes. Back-translocation proceeds from a post-translocation (POST) complex to a pre-translocation (PRE) complex, thus giving elongation factor G a second chance to translocate the tRNAs correctly. Binds to ribosomes in a GTP-dependent manner. This is Elongation factor 4 from Alcanivorax borkumensis (strain ATCC 700651 / DSM 11573 / NCIMB 13689 / SK2).